The primary structure comprises 447 residues: Na(+)-translocating NADH-quinone reductase subunit A (447 aa).

Belongs to the NqrA family. As to quaternary structure, composed of six subunits; NqrA, NqrB, NqrC, NqrD, NqrE and NqrF.

The catalysed reaction is a ubiquinone + n Na(+)(in) + NADH + H(+) = a ubiquinol + n Na(+)(out) + NAD(+). Its function is as follows. NQR complex catalyzes the reduction of ubiquinone-1 to ubiquinol by two successive reactions, coupled with the transport of Na(+) ions from the cytoplasm to the periplasm. NqrA to NqrE are probably involved in the second step, the conversion of ubisemiquinone to ubiquinol. The sequence is that of Na(+)-translocating NADH-quinone reductase subunit A from Yersinia pestis bv. Antiqua (strain Angola).